The chain runs to 876 residues: Serrate RNA effector molecule homolog (876 aa).

A disordered region spans residues 1 to 90; that stretch reads MGDSDDEYDR…RRDWDEHSSD (90 aa). G2 bears the N-acetylglycine mark. Position 4 is a phosphoserine (S4). Y8 is subject to Phosphotyrosine. Positions 8–73 are enriched in basic and acidic residues; that stretch reads YDRRRRDKFR…ERFSPPRHEL (66 aa). 3 positions are modified to phosphoserine: S67, S74, and S136. K150 is covalently cross-linked (Glycyl lysine isopeptide (Lys-Gly) (interchain with G-Cter in SUMO2)). The tract at residues 272–413 is disordered; the sequence is EEEEQAGKPG…PKDAPGLECK (142 aa). Over residues 297-347 the composition is skewed to basic and acidic residues; sequence DGERKANEKDDKKEDGKQAENESSSDDKIKKSEGDGDKEEKKEDSEKEAKK. The segment covering 370–387 has biased composition (acidic residues); it reads SESESESGQAEEEKEEAD. A compositionally biased stretch (basic and acidic residues) spans 388-413; sequence ETLKEKEKPKEEEREKPKDAPGLECK. S493 carries the phosphoserine modification. T544 is subject to Phosphothreonine. S570 carries the post-translational modification Phosphoserine. Residues 575–597 form a disordered region; it reads ELLGSSGGAPPEEPPKEGNPAEI. Phosphothreonine is present on T671. Residue S679 is modified to Phosphoserine. Residues R833, R840, and R850 each carry the omega-N-methylarginine modification. The segment at 835–854 is disordered; sequence NYDAFRGQGGYPGKPRNRMV.

This sequence belongs to the ARS2 family. In terms of assembly, interacts with CASP8AP2, ERBB4, NCBP1/CBP80 and DROSHA. Interacts with LUZP4. Interacts with NCBP2/CBP20 and NCBP3. Interacts with MTREX.

It is found in the nucleus. Its subcellular location is the nucleoplasm. It localises to the cytoplasm. Acts as a mediator between the cap-binding complex (CBC) and the primary microRNAs (miRNAs) processing machinery during cell proliferation. Contributes to the stability and delivery of capped primary miRNA transcripts to the primary miRNA processing complex containing DGCR8 and DROSHA, thereby playing a role in RNA-mediated gene silencing (RNAi) by miRNAs. Binds capped RNAs (m7GpppG-capped RNA); however interaction is probably mediated via its interaction with NCBP1/CBP80 component of the CBC complex. Involved in cell cycle progression at S phase. Does not directly confer arsenite resistance but rather modulates arsenic sensitivity. Independently of its activity on miRNAs, necessary and sufficient to promote neural stem cell self-renewal. Does so by directly binding SOX2 promoter and positively regulating its transcription. This Bos taurus (Bovine) protein is Serrate RNA effector molecule homolog (SRRT).